The primary structure comprises 408 residues: Eukaryotic initiation factor 4A-II (408 aa).

Positions 1–22 are disordered; that stretch reads MSGGSADYNSREHGGPEGMDPD. A Q motif motif is present at residues 34–62; that stretch reads DNFDDMNLKESLLRGIYAYGFEKPSAIQQ. One can recognise a Helicase ATP-binding domain in the interval 65–236; sequence IIPCIKGYDV…KKFMRDPIRI (172 aa). Residue 77–84 participates in ATP binding; that stretch reads QAQSGTGK. Phosphothreonine is present on T160. The DEAD box motif lies at 183-186; that stretch reads LDEA. One can recognise a Helicase C-terminal domain in the interval 247–408; the sequence is GIKQFYINVE…EMPMNVADLI (162 aa).

This sequence belongs to the DEAD box helicase family. eIF4A subfamily. As to quaternary structure, eIF4F is a multi-subunit complex, the composition of which varies with external and internal environmental conditions. It is composed of at least EIF4A, EIF4E and EIF4G1/EIFFG3. Interacts with EIF4E. May interact with NOM1.

It catalyses the reaction ATP + H2O = ADP + phosphate + H(+). Its function is as follows. ATP-dependent RNA helicase which is a subunit of the eIF4F complex involved in cap recognition and is required for mRNA binding to ribosome. In the current model of translation initiation, eIF4A unwinds RNA secondary structures in the 5'-UTR of mRNAs which is necessary to allow efficient binding of the small ribosomal subunit, and subsequent scanning for the initiator codon. This Macaca fascicularis (Crab-eating macaque) protein is Eukaryotic initiation factor 4A-II (EIF4A2).